The following is a 407-amino-acid chain: Substance-P receptor (407 aa).

The segment at 1–20 (MDNVLPVDSDLFPNTSTNTS) is disordered. Topologically, residues 1 to 31 (MDNVLPVDSDLFPNTSTNTSESNQFVQPTWQ) are extracellular. Residues Asn14 and Asn18 are each glycosylated (N-linked (GlcNAc...) asparagine). A helical transmembrane segment spans residues 32–54 (IVLWAAAYTVIVVTSVVGNVVVI). Residues 55 to 64 (WIILAHKRMR) are Cytoplasmic-facing. The chain crosses the membrane as a helical span at residues 65 to 86 (TVTNYFLVNLAFAEACMAAFNT). Topologically, residues 87 to 106 (VVNFTYAVHNVWYYGLFYCK) are extracellular. A disulfide bridge connects residues Cys105 and Cys180. The helical transmembrane segment at 107-128 (FHNFFPIAALFASIYSMTAVAF) threads the bilayer. The Cytoplasmic portion of the chain corresponds to 129–148 (DRYMAIIHPLQPRLSATATK). Residues 149–169 (VVIFVIWVLALLLAFPQGYYS) traverse the membrane as a helical segment. Topologically, residues 170 to 194 (TTETMPSRVVCMIEWPEHPNRTYEK) are extracellular. Residues 195 to 219 (AYHICVTVLIYFLPLLVIGYAYTVV) form a helical membrane-spanning segment. At 220–248 (GITLWASEIPGDSSDRYHEQVSAKRKVVK) the chain is on the cytoplasmic side. A helical membrane pass occupies residues 249–270 (MMIVVVCTFAICWLPFHIFFLL). The Extracellular portion of the chain corresponds to 271–283 (PYINPDLYLKKFI). A helical transmembrane segment spans residues 284 to 308 (QQVYLASMWLAMSSTMYNPIIYCCL). Residues 309-407 (NDRFRLGFKH…SSSFYSNMLA (99 aa)) lie on the Cytoplasmic side of the membrane. The S-palmitoyl cysteine moiety is linked to residue Cys322. Residues 362–407 (VGAHEDEPEEGPKATPSSLDLTSNGSSRSNSKTMTESSSFYSNMLA) are disordered. Residues 376–407 (TPSSLDLTSNGSSRSNSKTMTESSSFYSNMLA) are compositionally biased toward polar residues.

It belongs to the G-protein coupled receptor 1 family. As to quaternary structure, interacts with ARRB1.

Its subcellular location is the cell membrane. Its function is as follows. This is a receptor for the tachykinin neuropeptide substance P. It is probably associated with G proteins that activate a phosphatidylinositol-calcium second messenger system. The rank order of affinity of this receptor to tachykinins is: substance P &gt; substance K &gt; neuromedin K. In Mus musculus (Mouse), this protein is Substance-P receptor (Tacr1).